Consider the following 205-residue polypeptide: High frequency lysogenization protein HflD homolog (205 aa).

Belongs to the HflD family.

The protein localises to the cytoplasm. It is found in the cell inner membrane. The chain is High frequency lysogenization protein HflD homolog from Shewanella sp. (strain MR-4).